A 220-amino-acid polypeptide reads, in one-letter code: Probable septum site-determining protein MinC (220 aa).

The protein belongs to the MinC family. As to quaternary structure, interacts with MinD and FtsZ.

Cell division inhibitor that blocks the formation of polar Z ring septums. Rapidly oscillates between the poles of the cell to destabilize FtsZ filaments that have formed before they mature into polar Z rings. Prevents FtsZ polymerization. This Vibrio parahaemolyticus serotype O3:K6 (strain RIMD 2210633) protein is Probable septum site-determining protein MinC.